The primary structure comprises 589 residues: Aspartate--tRNA ligase (589 aa).

Position 174 (Glu-174) interacts with L-aspartate. An aspartate region spans residues 198-201 (QLFK). Arg-220 contacts L-aspartate. Residues 220 to 222 (RDE) and Gln-229 each bind ATP. His-448 serves as a coordination point for L-aspartate. Glu-484 contributes to the ATP binding site. Residue Arg-491 coordinates L-aspartate. 536 to 539 (GLDR) serves as a coordination point for ATP.

Belongs to the class-II aminoacyl-tRNA synthetase family. Type 1 subfamily. In terms of assembly, homodimer.

The protein resides in the cytoplasm. It carries out the reaction tRNA(Asp) + L-aspartate + ATP = L-aspartyl-tRNA(Asp) + AMP + diphosphate. In terms of biological role, catalyzes the attachment of L-aspartate to tRNA(Asp) in a two-step reaction: L-aspartate is first activated by ATP to form Asp-AMP and then transferred to the acceptor end of tRNA(Asp). This Leuconostoc citreum (strain KM20) protein is Aspartate--tRNA ligase.